We begin with the raw amino-acid sequence, 140 residues long: Class I hydrophobin C (140 aa).

The N-terminal stretch at 1 to 23 (MKFFVPAFLFAATAMALPGSGSA) is a signal peptide. 4 cysteine pairs are disulfide-bonded: cysteine 41–cysteine 114, cysteine 49–cysteine 108, cysteine 50–cysteine 85, and cysteine 115–cysteine 133.

Belongs to the fungal hydrophobin family.

It is found in the secreted. Its subcellular location is the cell wall. Aerial growth, conidiation, and dispersal of filamentous fungi in the environment rely upon a capability of their secreting small amphipathic proteins called hydrophobins (HPBs) with low sequence identity. Class I can self-assemble into an outermost layer of rodlet bundles on aerial cell surfaces, conferring cellular hydrophobicity that supports fungal growth, development and dispersal; whereas Class II form highly ordered films at water-air interfaces through intermolecular interactions but contribute nothing to the rodlet structure. In P.expansum, hydrophobins contribute to germination, tolerance to cold stress and mycotoxins patulin and citrinin production. HfbC is involved in the virulence on apple. The polypeptide is Class I hydrophobin C (Penicillium expansum (Blue mold rot fungus)).